Consider the following 160-residue polypeptide: Lipoprotein signal peptidase (160 aa).

3 helical membrane passes run 7–27, 61–81, and 91–111; these read VIYY…KWLV, GQFW…IIYI, and AGIG…DRVF. Active-site residues include D117 and D135. Residues 133–153 form a helical membrane-spanning segment; the sequence is IADSALTVGVILLFIHMFFFA.

It belongs to the peptidase A8 family.

The protein resides in the cell membrane. The catalysed reaction is Release of signal peptides from bacterial membrane prolipoproteins. Hydrolyzes -Xaa-Yaa-Zaa-|-(S,diacylglyceryl)Cys-, in which Xaa is hydrophobic (preferably Leu), and Yaa (Ala or Ser) and Zaa (Gly or Ala) have small, neutral side chains.. Its pathway is protein modification; lipoprotein biosynthesis (signal peptide cleavage). Functionally, this protein specifically catalyzes the removal of signal peptides from prolipoproteins. The chain is Lipoprotein signal peptidase from Geobacillus thermodenitrificans (strain NG80-2).